The sequence spans 213 residues: Dephospho-CoA kinase (213 aa).

Positions 3–202 (RIGLTGGIGS…QSYLALADKH (200 aa)) constitute a DPCK domain. Residue 11–16 (GSGKTR) coordinates ATP.

The protein belongs to the CoaE family.

The protein resides in the cytoplasm. The enzyme catalyses 3'-dephospho-CoA + ATP = ADP + CoA + H(+). Its pathway is cofactor biosynthesis; coenzyme A biosynthesis; CoA from (R)-pantothenate: step 5/5. Functionally, catalyzes the phosphorylation of the 3'-hydroxyl group of dephosphocoenzyme A to form coenzyme A. This Bordetella avium (strain 197N) protein is Dephospho-CoA kinase.